Reading from the N-terminus, the 785-residue chain is Phenylalanine--tRNA ligase beta subunit (785 aa).

The tRNA-binding domain occupies arginine 39–glycine 150. Residues arginine 400–proline 476 enclose the B5 domain. Mg(2+) is bound by residues aspartate 454, aspartate 460, glutamate 463, and glutamate 464. An FDX-ACB domain is found at serine 692 to arginine 784.

This sequence belongs to the phenylalanyl-tRNA synthetase beta subunit family. Type 1 subfamily. Tetramer of two alpha and two beta subunits. Mg(2+) is required as a cofactor.

It localises to the cytoplasm. The enzyme catalyses tRNA(Phe) + L-phenylalanine + ATP = L-phenylalanyl-tRNA(Phe) + AMP + diphosphate + H(+). In Gloeobacter violaceus (strain ATCC 29082 / PCC 7421), this protein is Phenylalanine--tRNA ligase beta subunit.